The sequence spans 312 residues: Malate dehydrogenase (312 aa).

Residues 12-17 (GAGFTG) and aspartate 36 contribute to the NAD(+) site. Positions 87 and 93 each coordinate substrate. NAD(+)-binding positions include asparagine 100 and 123-125 (LTN). Asparagine 125 lines the substrate pocket. Serine 149 is modified (phosphoserine). Residue arginine 156 coordinates substrate. Histidine 180 (proton acceptor) is an active-site residue.

The protein belongs to the LDH/MDH superfamily. MDH type 3 family.

It catalyses the reaction (S)-malate + NAD(+) = oxaloacetate + NADH + H(+). Functionally, catalyzes the reversible oxidation of malate to oxaloacetate. The protein is Malate dehydrogenase of Bacillus mycoides (strain KBAB4) (Bacillus weihenstephanensis).